Here is a 99-residue protein sequence, read N- to C-terminus: RNA-binding protein Hfq (99 aa).

The Sm domain occupies 9-68 (DPYLNALRRERIPVSIYLVNGIKLQGQIESFDQFVILLKNTVNQMVYKHAISTVVPARSV). Positions 67 to 99 (SVSHHNNNAQQQYQQQAAQAASAQSNETSSQAE) are disordered. The segment covering 72–99 (NNNAQQQYQQQAAQAASAQSNETSSQAE) has biased composition (low complexity).

The protein belongs to the Hfq family. Homohexamer.

Functionally, RNA chaperone that binds small regulatory RNA (sRNAs) and mRNAs to facilitate mRNA translational regulation in response to envelope stress, environmental stress and changes in metabolite concentrations. Also binds with high specificity to tRNAs. The chain is RNA-binding protein Hfq from Actinobacillus succinogenes (strain ATCC 55618 / DSM 22257 / CCUG 43843 / 130Z).